Here is a 446-residue protein sequence, read N- to C-terminus: Tubulin beta-1 chain (446 aa).

The MREI motif signature appears at 1–4 (MREI). GTP-binding residues include glutamine 11, glutamate 69, serine 138, glycine 142, threonine 143, glycine 144, asparagine 204, and asparagine 226. Glutamate 69 is a Mg(2+) binding site. The disordered stretch occupies residues 426–446 (QDATAEEEGEFEEEGEYEDGA). The span at 429–446 (TAEEEGEFEEEGEYEDGA) shows a compositional bias: acidic residues. A 5-glutamyl polyglutamate modification is found at glutamate 438.

Belongs to the tubulin family. Dimer of alpha and beta chains. A typical microtubule is a hollow water-filled tube with an outer diameter of 25 nm and an inner diameter of 15 nM. Alpha-beta heterodimers associate head-to-tail to form protofilaments running lengthwise along the microtubule wall with the beta-tubulin subunit facing the microtubule plus end conferring a structural polarity. Microtubules usually have 13 protofilaments but different protofilament numbers can be found in some organisms and specialized cells. The cofactor is Mg(2+). In terms of processing, some glutamate residues at the C-terminus are polyglycylated, resulting in polyglycine chains on the gamma-carboxyl group. Glycylation is mainly limited to tubulin incorporated into axonemes (cilia and flagella) whereas glutamylation is prevalent in neuronal cells, centrioles, axonemes, and the mitotic spindle. Both modifications can coexist on the same protein on adjacent residues, and lowering polyglycylation levels increases polyglutamylation, and reciprocally. The precise function of polyglycylation is still unclear. Post-translationally, some glutamate residues at the C-terminus are polyglutamylated, resulting in polyglutamate chains on the gamma-carboxyl group. Polyglutamylation plays a key role in microtubule severing by spastin (SPAST). SPAST preferentially recognizes and acts on microtubules decorated with short polyglutamate tails: severing activity by SPAST increases as the number of glutamates per tubulin rises from one to eight, but decreases beyond this glutamylation threshold. Brain.

It localises to the cytoplasm. Its subcellular location is the cytoskeleton. Functionally, tubulin is the major constituent of microtubules, a cylinder consisting of laterally associated linear protofilaments composed of alpha- and beta-tubulin heterodimers. Microtubules grow by the addition of GTP-tubulin dimers to the microtubule end, where a stabilizing cap forms. Below the cap, tubulin dimers are in GDP-bound state, owing to GTPase activity of alpha-tubulin. The chain is Tubulin beta-1 chain (tubb1) from Notothenia neglecta (Yellowbelly rockcod).